We begin with the raw amino-acid sequence, 201 residues long: Recombination protein RecR (201 aa).

Residues 57 to 72 form a C4-type zinc finger; sequence CADCRTFTEQEICTIC. The 96-residue stretch at 81–176 folds into the Toprim domain; it reads GLICVVESPA…DASRIAHGVP (96 aa).

Belongs to the RecR family.

Its function is as follows. May play a role in DNA repair. It seems to be involved in an RecBC-independent recombinational process of DNA repair. It may act with RecF and RecO. The sequence is that of Recombination protein RecR from Erwinia tasmaniensis (strain DSM 17950 / CFBP 7177 / CIP 109463 / NCPPB 4357 / Et1/99).